A 270-amino-acid chain; its full sequence is Sec-independent protein translocase protein TatC (270 aa).

6 helical membrane-spanning segments follow: residues 35–55 (LILS…YRVQ), 93–113 (AFWA…WAFI), 124–144 (WGLP…VFGY), 176–196 (VVTF…AVIL), 209–229 (QGWR…TPTP), and 231–251 (PANM…GVVL).

Belongs to the TatC family. In terms of assembly, forms a complex with TatA.

It is found in the cell membrane. In terms of biological role, part of the twin-arginine translocation (Tat) system that transports large folded proteins containing a characteristic twin-arginine motif in their signal peptide across membranes. The sequence is that of Sec-independent protein translocase protein TatC from Deinococcus radiodurans (strain ATCC 13939 / DSM 20539 / JCM 16871 / CCUG 27074 / LMG 4051 / NBRC 15346 / NCIMB 9279 / VKM B-1422 / R1).